We begin with the raw amino-acid sequence, 218 residues long: Pyridoxine/pyridoxamine 5'-phosphate oxidase (218 aa).

Residues 14-17 and Lys72 each bind substrate; that span reads RREY. Residues 67–72, 82–83, Arg88, Lys89, and Gln111 contribute to the FMN site; these read RIVLLK and YT. The substrate site is built by Tyr129, Arg133, and Ser137. Residues 146–147 and Trp191 each bind FMN; that span reads QS. 197 to 199 is a substrate binding site; sequence RLH. Residue Arg201 participates in FMN binding.

The protein belongs to the pyridoxamine 5'-phosphate oxidase family. Homodimer. Requires FMN as cofactor.

The catalysed reaction is pyridoxamine 5'-phosphate + O2 + H2O = pyridoxal 5'-phosphate + H2O2 + NH4(+). It catalyses the reaction pyridoxine 5'-phosphate + O2 = pyridoxal 5'-phosphate + H2O2. The protein operates within cofactor metabolism; pyridoxal 5'-phosphate salvage; pyridoxal 5'-phosphate from pyridoxamine 5'-phosphate: step 1/1. It participates in cofactor metabolism; pyridoxal 5'-phosphate salvage; pyridoxal 5'-phosphate from pyridoxine 5'-phosphate: step 1/1. Functionally, catalyzes the oxidation of either pyridoxine 5'-phosphate (PNP) or pyridoxamine 5'-phosphate (PMP) into pyridoxal 5'-phosphate (PLP). This is Pyridoxine/pyridoxamine 5'-phosphate oxidase from Enterobacter sp. (strain 638).